The chain runs to 365 residues: MFLKHLTIQNFRNHEELSLDFDSRLIFFVGDNGEGKTNLLEAICILSWLKSFRESEDSNLIRWGSENYFLRGKIKDNLKESVLEIGFTSKPSVKRKLKFNQEEIKKRTDLIGKFITVLLTPMDLKIIEGGPAERRKFIDAFISSFDPFYLESLLEYNKILKHRNALLKSGNPDISHLSIWDKKIVEKGIFILNKRREVVLELNSFYRVNLDKLSGGKDGLELIYKPNVKDQDEFLEKLNHNLSRDLRLGYTSVGIHRDDLFIGSDQRDITEFGSQGQKRSTVIALKAATFNYYKNILNTIPVLLIDDVIRELDVKRREYFVDLVVTAGQAFFTTTDLEGIQDYVGKLKDQKQIFLIRQGKVESIK.

Gly30–Thr37 contacts ATP.

It belongs to the RecF family.

It localises to the cytoplasm. Its function is as follows. The RecF protein is involved in DNA metabolism; it is required for DNA replication and normal SOS inducibility. RecF binds preferentially to single-stranded, linear DNA. It also seems to bind ATP. This chain is DNA replication and repair protein RecF, found in Leptospira interrogans serogroup Icterohaemorrhagiae serovar Lai (strain 56601).